A 154-amino-acid polypeptide reads, in one-letter code: Ecotin-like protein 2 (154 aa).

This sequence belongs to the protease inhibitor I11 (ecotin) family.

In Trypanosoma brucei brucei (strain 927/4 GUTat10.1), this protein is Ecotin-like protein 2.